A 166-amino-acid chain; its full sequence is Urocortin-3 (166 aa).

The signal sequence occupies residues 1–23 (MLVPAPFLLVLLLLLGAPQVGLS). Positions 24–123 (QRSPKAGSSP…QDKAKSDRRT (100 aa)) are excised as a propeptide. The segment covering 41-51 (REAEKSQRKDT) has biased composition (basic and acidic residues). Positions 41 to 123 (REAEKSQRKD…QDKAKSDRRT (83 aa)) are disordered. A compositionally biased stretch (acidic residues) spans 68-77 (EDQEGQEEED). Over residues 86–96 (SVGGGGGGGAG) the composition is skewed to gly residues. Over residues 113-123 (SQDKAKSDRRT) the composition is skewed to basic and acidic residues. At Ile162 the chain carries Isoleucine amide.

The protein belongs to the sauvagine/corticotropin-releasing factor/urotensin I family. Binds with high affinity to CRF receptors 2-alpha and 2-beta.

The protein localises to the secreted. Suppresses food intake, delays gastric emptying and decreases heat-induced edema. Might represent an endogenous ligand for maintaining homeostasis after stress. The polypeptide is Urocortin-3 (UCN3) (Bos taurus (Bovine)).